Here is a 130-residue protein sequence, read N- to C-terminus: Phosphomevalonate dehydratase small subunit (130 aa).

The active-site Proton acceptor is the Ser-62.

The protein belongs to the AcnX type II small subunit family. Heterodimer composed of a large subunit (PMDh-L) and a small subunit (PMDh-S).

It catalyses the reaction (R)-5-phosphomevalonate = (2E)-3-methyl-5-phosphooxypent-2-enoate + H2O. Its pathway is isoprenoid biosynthesis; isopentenyl diphosphate biosynthesis via mevalonate pathway. In terms of biological role, component of a hydro-lyase that catalyzes the dehydration of mevalonate 5-phosphate (MVA5P) to form trans-anhydromevalonate 5-phosphate (tAHMP). Involved in the archaeal mevalonate (MVA) pathway, which provides fundamental precursors for isoprenoid biosynthesis, such as isopentenyl diphosphate (IPP) and dimethylallyl diphosphate (DMAPP). This Pyrococcus abyssi (strain GE5 / Orsay) protein is Phosphomevalonate dehydratase small subunit.